A 481-amino-acid chain; its full sequence is MSRLPSKTKYHSSHRSLNRKTPLLQRSSETNSLRESGIETASSQLSLAASSYTPIDEEMTELELKIYLFLFTRALNHKLGYTQENNPDDKAQKAGIDINLDCLNYLLEILYQNLEPQLEKGANLSYHKSSTARKALEYHETLNSRLKKKIAKDAEHKNPLTLLRILNTKTTSISTLIGTGGGIGITGAGAIAGSAAAGIGTAVTVGVLLFYLCWRTTSEYWKKKNAEKLFEHTDQIDNENIIELVSALSAFYIVKEFEHKNMQKASLKLSLNPESLFEIFQNIYHNKSFRLPSQLPIQKELKAIAKQAKIDADKIHTHLIEYVNTNKAQSISINLYALIIPSFAYNSEESPTVVKTVAALHAWLWALDKTLDMKDFLFRNSFEKRLEKVRAGVVKTMKTFKEEVNNVLLETDDSSSGVSLLADEDKTDRVKEWVNKQKLPSPGALSPIKSASHLALFSSLREQKDKAVNSSGSRLSLRLGN.

Residues 1–18 (MSRLPSKTKYHSSHRSLN) are compositionally biased toward basic residues. Positions 1–37 (MSRLPSKTKYHSSHRSLNRKTPLLQRSSETNSLRESG) are disordered. Positions 24–34 (LQRSSETNSLR) are enriched in polar residues. 2 consecutive transmembrane segments (helical) span residues 172–191 (SIST…AGAI) and 195–214 (AAAG…YLCW).

The protein resides in the membrane. This is an uncharacterized protein from Coxiella burnetii (strain RSA 493 / Nine Mile phase I).